A 348-amino-acid polypeptide reads, in one-letter code: Putative zinc metalloprotease HP_0258 (348 aa).

His16 contributes to the Zn(2+) binding site. Glu17 is an active-site residue. His20 serves as a coordination point for Zn(2+). 5 helical membrane-spanning segments follow: residues 43–63, 93–113, 247–267, 275–295, and 324–344; these read CFFKLFGTQFALSLIPLGGYV, WILFGGAFFNFLFAILVYFFL, LIMGSSSVKELSGVVGIVGAL, MLLLFGAFLSINLGILNLLPI, and LWLAGVGFLVFIMFLGLFNDL. The PDZ domain maps to 106–175; that stretch reads AILVYFFLAL…GELVLEIERN (70 aa).

Belongs to the peptidase M50B family. The cofactor is Zn(2+).

It is found in the cell inner membrane. In Helicobacter pylori (strain ATCC 700392 / 26695) (Campylobacter pylori), this protein is Putative zinc metalloprotease HP_0258.